The sequence spans 338 residues: GTPase Obg (338 aa).

One can recognise an Obg domain in the interval 1 to 159 (MSFIDEVKIH…RWLRLELKLM (159 aa)). The region spanning 160 to 331 (ADVGLLGMPS…LLDEIARQLW (172 aa)) is the OBG-type G domain. GTP contacts are provided by residues 166 to 173 (GMPSVGKS), 191 to 195 (FTTLK), 213 to 216 (DIPG), 283 to 286 (NKMD), and 312 to 314 (SAA). Mg(2+) is bound by residues Ser-173 and Thr-193.

Belongs to the TRAFAC class OBG-HflX-like GTPase superfamily. OBG GTPase family. As to quaternary structure, monomer. It depends on Mg(2+) as a cofactor.

Its subcellular location is the cytoplasm. In terms of biological role, an essential GTPase which binds GTP, GDP and possibly (p)ppGpp with moderate affinity, with high nucleotide exchange rates and a fairly low GTP hydrolysis rate. Plays a role in control of the cell cycle, stress response, ribosome biogenesis and in those bacteria that undergo differentiation, in morphogenesis control. The polypeptide is GTPase Obg (Geotalea daltonii (strain DSM 22248 / JCM 15807 / FRC-32) (Geobacter daltonii)).